Reading from the N-terminus, the 252-residue chain is Small ribosomal subunit protein eS1A (252 aa).

The residue at position 2 (Ala-2) is an N-acetylalanine; partial.

The protein belongs to the eukaryotic ribosomal protein eS1 family. In terms of assembly, component of the small ribosomal subunit (SSU). Mature yeast ribosomes consist of a small (40S) and a large (60S) subunit. The 40S small subunit contains 1 molecule of ribosomal RNA (18S rRNA) and at least 33 different proteins. The large 60S subunit contains 3 rRNA molecules (25S, 5.8S and 5S rRNA) and at least 46 different proteins. eS1 interacts directly with uS11 and eS26, which form part of the mRNA exit tunnel.

The protein resides in the cytoplasm. Its function is as follows. Component of the ribosome, a large ribonucleoprotein complex responsible for the synthesis of proteins in the cell. The small ribosomal subunit (SSU) binds messenger RNAs (mRNAs) and translates the encoded message by selecting cognate aminoacyl-transfer RNA (tRNA) molecules. The large subunit (LSU) contains the ribosomal catalytic site termed the peptidyl transferase center (PTC), which catalyzes the formation of peptide bonds, thereby polymerizing the amino acids delivered by tRNAs into a polypeptide chain. The nascent polypeptides leave the ribosome through a tunnel in the LSU and interact with protein factors that function in enzymatic processing, targeting, and the membrane insertion of nascent chains at the exit of the ribosomal tunnel. In Schizosaccharomyces pombe (strain 972 / ATCC 24843) (Fission yeast), this protein is Small ribosomal subunit protein eS1A (rps101).